Reading from the N-terminus, the 357-residue chain is Meiotically up-regulated gene 135 protein (357 aa).

It belongs to the UPF0612 family.

Its subcellular location is the nucleus. Functionally, has a role in meiosis. The protein is Meiotically up-regulated gene 135 protein (mug135) of Schizosaccharomyces pombe (strain 972 / ATCC 24843) (Fission yeast).